A 223-amino-acid chain; its full sequence is Uracil-DNA glycosylase (223 aa).

The active-site Proton acceptor is the Asp64.

The protein belongs to the uracil-DNA glycosylase (UDG) superfamily. UNG family.

The protein resides in the cytoplasm. The catalysed reaction is Hydrolyzes single-stranded DNA or mismatched double-stranded DNA and polynucleotides, releasing free uracil.. Excises uracil residues from the DNA which can arise as a result of misincorporation of dUMP residues by DNA polymerase or due to deamination of cytosine. The protein is Uracil-DNA glycosylase of Desulfitobacterium hafniense (strain DSM 10664 / DCB-2).